Consider the following 154-residue polypeptide: ATP synthase subunit b (154 aa).

A helical transmembrane segment spans residues 5–27; it reads LLGQAIAFTLFVWFCMKYVWPPI.

It belongs to the ATPase B chain family. In terms of assembly, F-type ATPases have 2 components, F(1) - the catalytic core - and F(0) - the membrane proton channel. F(1) has five subunits: alpha(3), beta(3), gamma(1), delta(1), epsilon(1). F(0) has three main subunits: a(1), b(2) and c(10-14). The alpha and beta chains form an alternating ring which encloses part of the gamma chain. F(1) is attached to F(0) by a central stalk formed by the gamma and epsilon chains, while a peripheral stalk is formed by the delta and b chains.

The protein localises to the cell inner membrane. Its function is as follows. F(1)F(0) ATP synthase produces ATP from ADP in the presence of a proton or sodium gradient. F-type ATPases consist of two structural domains, F(1) containing the extramembraneous catalytic core and F(0) containing the membrane proton channel, linked together by a central stalk and a peripheral stalk. During catalysis, ATP synthesis in the catalytic domain of F(1) is coupled via a rotary mechanism of the central stalk subunits to proton translocation. Functionally, component of the F(0) channel, it forms part of the peripheral stalk, linking F(1) to F(0). This is ATP synthase subunit b from Aliivibrio fischeri (strain ATCC 700601 / ES114) (Vibrio fischeri).